Consider the following 203-residue polypeptide: Outer-membrane lipoprotein carrier protein (203 aa).

A signal peptide spans 1-19; sequence MKKSIVVLFSAVLPFAVFA.

The protein belongs to the LolA family. As to quaternary structure, monomer.

The protein resides in the periplasm. Functionally, participates in the translocation of lipoproteins from the inner membrane to the outer membrane. Only forms a complex with a lipoprotein if the residue after the N-terminal Cys is not an aspartate (The Asp acts as a targeting signal to indicate that the lipoprotein should stay in the inner membrane). This chain is Outer-membrane lipoprotein carrier protein, found in Shewanella amazonensis (strain ATCC BAA-1098 / SB2B).